The chain runs to 325 residues: Beta-ketoacyl-[acyl-carrier-protein] synthase III (325 aa).

Catalysis depends on residues Cys-113 and His-250. An ACP-binding region spans residues 251 to 255 (QANIR). Residue Asn-280 is part of the active site.

It belongs to the thiolase-like superfamily. FabH family. As to quaternary structure, homodimer.

The protein localises to the cytoplasm. It carries out the reaction malonyl-[ACP] + acetyl-CoA + H(+) = 3-oxobutanoyl-[ACP] + CO2 + CoA. It participates in lipid metabolism; fatty acid biosynthesis. Its function is as follows. Catalyzes the condensation reaction of fatty acid synthesis by the addition to an acyl acceptor of two carbons from malonyl-ACP. Catalyzes the first condensation reaction which initiates fatty acid synthesis and may therefore play a role in governing the total rate of fatty acid production. Possesses both acetoacetyl-ACP synthase and acetyl transacylase activities. Its substrate specificity determines the biosynthesis of branched-chain and/or straight-chain of fatty acids. This is Beta-ketoacyl-[acyl-carrier-protein] synthase III from Streptococcus suis (strain 98HAH33).